The chain runs to 276 residues: Diaminopimelate epimerase (276 aa).

Substrate-binding residues include N13, Q46, and N66. The active-site Proton donor is C75. Residues 76–77 (GN), N159, N192, and 210–211 (ER) contribute to the substrate site. C219 functions as the Proton acceptor in the catalytic mechanism. Substrate is bound at residue 220-221 (GT).

This sequence belongs to the diaminopimelate epimerase family. In terms of assembly, homodimer.

It is found in the cytoplasm. It catalyses the reaction (2S,6S)-2,6-diaminopimelate = meso-2,6-diaminopimelate. It participates in amino-acid biosynthesis; L-lysine biosynthesis via DAP pathway; DL-2,6-diaminopimelate from LL-2,6-diaminopimelate: step 1/1. Catalyzes the stereoinversion of LL-2,6-diaminopimelate (L,L-DAP) to meso-diaminopimelate (meso-DAP), a precursor of L-lysine and an essential component of the bacterial peptidoglycan. This Pseudomonas fluorescens protein is Diaminopimelate epimerase.